A 57-amino-acid chain; its full sequence is DNA gyrase inhibitor YacG (57 aa).

4 residues coordinate Zn(2+): cysteine 5, cysteine 8, cysteine 20, and cysteine 24.

Belongs to the DNA gyrase inhibitor YacG family. Interacts with GyrB. Zn(2+) is required as a cofactor.

Inhibits all the catalytic activities of DNA gyrase by preventing its interaction with DNA. Acts by binding directly to the C-terminal domain of GyrB, which probably disrupts DNA binding by the gyrase. The protein is DNA gyrase inhibitor YacG of Caulobacter vibrioides (strain ATCC 19089 / CIP 103742 / CB 15) (Caulobacter crescentus).